Reading from the N-terminus, the 412-residue chain is uncharacterized protein (412 aa).

In terms of domain architecture, TRAM spans 6–64; that stretch reads ELAKGDIISVEVLRPAHGGEGIGHHDGRVIFVKGGIPGDVVDVEIAQLKKKWARGEVVK. S-adenosyl-L-methionine is bound by residues Gln242, Tyr278, Glu300, and Asp341. Cys368 (nucleophile) is an active-site residue.

It belongs to the class I-like SAM-binding methyltransferase superfamily. RNA M5U methyltransferase family.

This is an uncharacterized protein from Corynebacterium glutamicum (strain ATCC 13032 / DSM 20300 / JCM 1318 / BCRC 11384 / CCUG 27702 / LMG 3730 / NBRC 12168 / NCIMB 10025 / NRRL B-2784 / 534).